A 178-amino-acid polypeptide reads, in one-letter code: ATP-dependent protease subunit HslV (178 aa).

Residue threonine 7 is part of the active site. The Na(+) site is built by glycine 162, cysteine 165, and threonine 168.

The protein belongs to the peptidase T1B family. HslV subfamily. In terms of assembly, a double ring-shaped homohexamer of HslV is capped on each side by a ring-shaped HslU homohexamer. The assembly of the HslU/HslV complex is dependent on binding of ATP.

The protein resides in the cytoplasm. It catalyses the reaction ATP-dependent cleavage of peptide bonds with broad specificity.. Its activity is regulated as follows. Allosterically activated by HslU binding. Its function is as follows. Protease subunit of a proteasome-like degradation complex believed to be a general protein degrading machinery. This chain is ATP-dependent protease subunit HslV, found in Paraburkholderia xenovorans (strain LB400).